The following is a 426-amino-acid chain: Glutamate-1-semialdehyde 2,1-aminomutase (426 aa).

Residue K265 is modified to N6-(pyridoxal phosphate)lysine.

It belongs to the class-III pyridoxal-phosphate-dependent aminotransferase family. HemL subfamily. Homodimer. The cofactor is pyridoxal 5'-phosphate.

The protein localises to the cytoplasm. It catalyses the reaction (S)-4-amino-5-oxopentanoate = 5-aminolevulinate. It functions in the pathway porphyrin-containing compound metabolism; protoporphyrin-IX biosynthesis; 5-aminolevulinate from L-glutamyl-tRNA(Glu): step 2/2. The sequence is that of Glutamate-1-semialdehyde 2,1-aminomutase from Escherichia coli O7:K1 (strain IAI39 / ExPEC).